Reading from the N-terminus, the 392-residue chain is GTPase Obg (392 aa).

Residues 1–159 enclose the Obg domain; it reads MKFIDEALIR…RDLQLELMLL (159 aa). The OBG-type G domain maps to 160–333; it reads ADVGMLGLPN…LCRDIMDFIE (174 aa). GTP-binding positions include 166–173, 191–195, 213–216, 283–286, and 314–316; these read GLPNAGKS, FTTLV, DIPG, NKID, and SAA. Residues Ser-173 and Thr-193 each coordinate Mg(2+). The interval 362–392 is disordered; that stretch reads EQVFTEDDQEGDDWDDWSEDDEEGVEIIYKP. Acidic residues predominate over residues 365-386; it reads FTEDDQEGDDWDDWSEDDEEGV.

It belongs to the TRAFAC class OBG-HflX-like GTPase superfamily. OBG GTPase family. Monomer. The cofactor is Mg(2+).

It is found in the cytoplasm. Its function is as follows. An essential GTPase which binds GTP, GDP and possibly (p)ppGpp with moderate affinity, with high nucleotide exchange rates and a fairly low GTP hydrolysis rate. Plays a role in control of the cell cycle, stress response, ribosome biogenesis and in those bacteria that undergo differentiation, in morphogenesis control. This Histophilus somni (strain 129Pt) (Haemophilus somnus) protein is GTPase Obg.